A 341-amino-acid polypeptide reads, in one-letter code: Transmembrane protein 120A-A (341 aa).

At 1 to 131 (MLFNPTGLTE…KQSKFAYKDE (131 aa)) the chain is on the cytoplasmic side. K129 contacts CoA. Residues 132–151 (YEKFKLYLTVLLLFFSFTCR) traverse the membrane as a helical segment. At 152–157 (FLVSYR) the chain is on the extracellular side. A helical membrane pass occupies residues 158–176 (VVDALFNFLLVWYYCTLTI). At 177–189 (RESILINNGSKIK) the chain is on the cytoplasmic side. S186 and K187 together coordinate CoA. Residues 190–208 (GWWVFQHYVSTFLSGVMLT) form a helical membrane-spanning segment. The Extracellular segment spans residues 209 to 217 (WPDGELYQM). Residues 218-239 (FRNQFLSYSMYINFVQFFQYYY) form a helical membrane-spanning segment. 4 residues coordinate CoA: Q236, Y239, Q240, and H282. The Cytoplasmic segment spans residues 240–269 (QSGCLYRLRALGERHNMDLTVEGFQSWMWR). Residues 270–293 (GLTFLLPFLFLGHFFQLYNGITLF) form a helical membrane-spanning segment. The Extracellular portion of the chain corresponds to 294–303 (QMTQLPEWKE). A helical membrane pass occupies residues 304 to 329 (WQVLMCGSTFLVLFMGNFFTTLGVVY). Residues 330 to 341 (HKYMDQDKAKGL) are Cytoplasmic-facing. K331 is a CoA binding site.

This sequence belongs to the TMEM120 family. Homodimer.

It is found in the cell membrane. The protein localises to the nucleus inner membrane. Its subcellular location is the endoplasmic reticulum. Multifunctional protein involved in mechanosensation, and plays an essential role in lipid metabolism. May function as a potential ion channel involved in sensing mechanical stimuli. TMEM120A is structurally similar to a lipid-modifying enzyme, ELOVL7, and contains a bound coenzyme A molecule, which suggests it might function as an enzyme in lipid metabolism. The sequence is that of Transmembrane protein 120A-A (tmem120aa) from Danio rerio (Zebrafish).